We begin with the raw amino-acid sequence, 448 residues long: Probable rhamnogalacturonase E (448 aa).

The first 22 residues, 1-22 (MTWSTSFLVATSLLSIINSVHA), serve as a signal peptide directing secretion. A disulfide bridge connects residues Cys-43 and Cys-69. N-linked (GlcNAc...) asparagine glycans are attached at residues Asn-54, Asn-92, and Asn-131. The Proton donor role is filled by Asp-221. Cys-223 and Cys-240 are disulfide-bonded. Asn-256 and Asn-284 each carry an N-linked (GlcNAc...) asparagine glycan. His-296 is an active-site residue. Asn-323 and Asn-328 each carry an N-linked (GlcNAc...) asparagine glycan. Cystine bridges form between Cys-346-Cys-352 and Cys-374-Cys-382.

It belongs to the glycosyl hydrolase 28 family.

Its subcellular location is the secreted. In terms of biological role, pectinolytic enzymes consist of four classes of enzymes: pectine lyase, polygalacturonase, pectin methylesterase and rhamnogalacturonase. Hydrolyzes alpha-D-galacturonopyranosyl-(1,2)-alpha-L-rhamnopyranosyl linkages in the backbone of the hairy regions of pectins. This is Probable rhamnogalacturonase E (rhgE) from Aspergillus niger (strain ATCC MYA-4892 / CBS 513.88 / FGSC A1513).